Consider the following 627-residue polypeptide: Chaperone protein DnaK (627 aa).

The residue at position 197 (threonine 197) is a Phosphothreonine; by autocatalysis. Over residues 598-611 (AYAKEQGGQQGAAD) the composition is skewed to low complexity. Positions 598-627 (AYAKEQGGQQGAADAGKKADDDDVIDAEVE) are disordered. Residues 618–627 (DDDVIDAEVE) are compositionally biased toward acidic residues.

It belongs to the heat shock protein 70 family.

In terms of biological role, acts as a chaperone. In Sulfurovum sp. (strain NBC37-1), this protein is Chaperone protein DnaK.